Here is a 620-residue protein sequence, read N- to C-terminus: Transcription factor GTE11 (620 aa).

The disordered stretch occupies residues methionine 1 to threonine 35. A Bromo domain is found at threonine 124–isoleucine 230. The 82-residue stretch at asparagine 270–aspartate 351 folds into the NET domain. A Phosphoserine modification is found at serine 417. Positions glutamate 445–aspartate 620 are transcription activation domain. A coiled-coil region spans residues asparagine 470–asparagine 544. Disordered stretches follow at residues lysine 491–lysine 511 and glutamate 597–aspartate 620.

As to quaternary structure, interacts with BT1, BT2 and BT4.

It is found in the nucleus. This Arabidopsis thaliana (Mouse-ear cress) protein is Transcription factor GTE11 (GTE11).